A 205-amino-acid polypeptide reads, in one-letter code: CASP-like protein 2A1 (205 aa).

Topologically, residues 1–35 (MMGDKGEKECATASSPIELGCGEGDESGNKSSMRT) are cytoplasmic. A helical membrane pass occupies residues 36–56 (VETLLRLVPVALCTVSLVVML). Residues 57 to 77 (KNSQTNDFGSLSYSDLGAFRY) lie on the Extracellular side of the membrane. Residues 78–98 (LVHANGICAGYSLLSAIFTAM) traverse the membrane as a helical segment. Residues 99–106 (PRPPTMSR) are Cytoplasmic-facing. Residues 107–127 (AWTFFLLDQVLTYLILAAGAV) traverse the membrane as a helical segment. Over 128-157 (STEVVYLAYKGDEAVTWSDACSSFGGFCQK) the chain is Extracellular. The chain crosses the membrane as a helical span at residues 158 to 178 (TTASISITFVTVLCYAVLSLI). Residues 179–205 (SSYKLFSKYDAPICFNGKGIEIAAFHS) are Cytoplasmic-facing.

Belongs to the Casparian strip membrane proteins (CASP) family. Homodimer and heterodimers.

Its subcellular location is the cell membrane. This is CASP-like protein 2A1 from Vitis vinifera (Grape).